The chain runs to 293 residues: 4-hydroxybenzoate octaprenyltransferase (293 aa).

Helical transmembrane passes span 26 to 48, 98 to 118, 122 to 142, 145 to 165, 167 to 187, 218 to 238, 241 to 261, and 272 to 292; these read PIGTLLLLYPTLWALFAAAGGMP, TEAKILFVLLLCIAFVLDLLL, TFLLSFVAVALAIIYPFMKRF, LPQVVLGMAFGWAIPMAYGAV, ESLPLECWLLFFANIFWTVAY, IIALLQFITLVLLVIFGWISQ, WGYFVVLGLSASLFSHQCWLT, and AFLNNHYFGLGVFFAILVGIY.

The protein belongs to the UbiA prenyltransferase family. The cofactor is Mg(2+).

The protein resides in the cell inner membrane. It carries out the reaction all-trans-octaprenyl diphosphate + 4-hydroxybenzoate = 4-hydroxy-3-(all-trans-octaprenyl)benzoate + diphosphate. It functions in the pathway cofactor biosynthesis; ubiquinone biosynthesis. Its function is as follows. Catalyzes the prenylation of para-hydroxybenzoate (PHB) with an all-trans polyprenyl group. Mediates the second step in the final reaction sequence of ubiquinone-8 (UQ-8) biosynthesis, which is the condensation of the polyisoprenoid side chain with PHB, generating the first membrane-bound Q intermediate 3-octaprenyl-4-hydroxybenzoate. The chain is 4-hydroxybenzoate octaprenyltransferase from Actinobacillus pleuropneumoniae serotype 3 (strain JL03).